The sequence spans 313 residues: GTP cyclohydrolase MptA (313 aa).

This sequence belongs to the GTP cyclohydrolase IV family. Homodimer. The cofactor is Fe(2+).

The enzyme catalyses GTP + H2O = 7,8-dihydroneopterin 2',3'-cyclic phosphate + formate + diphosphate + H(+). Its pathway is cofactor biosynthesis; 5,6,7,8-tetrahydromethanopterin biosynthesis. Functionally, converts GTP to 7,8-dihydro-D-neopterin 2',3'-cyclic phosphate, the first intermediate in the biosynthesis of coenzyme methanopterin. In Methanosphaera stadtmanae (strain ATCC 43021 / DSM 3091 / JCM 11832 / MCB-3), this protein is GTP cyclohydrolase MptA.